A 119-amino-acid polypeptide reads, in one-letter code: Large ribosomal subunit protein bL20 (119 aa).

This sequence belongs to the bacterial ribosomal protein bL20 family.

Its function is as follows. Binds directly to 23S ribosomal RNA and is necessary for the in vitro assembly process of the 50S ribosomal subunit. It is not involved in the protein synthesizing functions of that subunit. The chain is Large ribosomal subunit protein bL20 from Xanthomonas oryzae pv. oryzae (strain PXO99A).